The chain runs to 574 residues: Probable amino-acid permease meu22 (574 aa).

9 consecutive transmembrane segments (helical) span residues 69-89, 94-114, 173-193, 202-222, 291-311, 391-411, 412-432, 470-490, and 498-518; these read MIAI…NALA, ASIL…TSAL, GPVS…NIWG, FFLS…SIII, IFWR…LVVP, PIYA…TEAG, VGGA…TFIW, GVAM…FPIG, and FFQA…WKFF.

The protein belongs to the amino acid-polyamine-organocation (APC) superfamily.

It is found in the membrane. The polypeptide is Probable amino-acid permease meu22 (meu22) (Schizosaccharomyces pombe (strain 972 / ATCC 24843) (Fission yeast)).